A 103-amino-acid polypeptide reads, in one-letter code: MQNQRIRIRLKAFDHRLIDQSTAEIVETAKRTGAQVRGPIPLPTRKERFTVLISPHVNKDARDQYEIRTHKRLVDIVEPTDKTVDALMRLDLAAGVDVQISLG.

It belongs to the universal ribosomal protein uS10 family. Part of the 30S ribosomal subunit.

Functionally, involved in the binding of tRNA to the ribosomes. The chain is Small ribosomal subunit protein uS10 from Tolumonas auensis (strain DSM 9187 / NBRC 110442 / TA 4).